A 352-amino-acid polypeptide reads, in one-letter code: Outer membrane protein assembly factor BamC (352 aa).

An N-terminal signal peptide occupies residues Met1–Gly19. A lipid anchor (N-palmitoyl cysteine) is attached at Cys20. Residue Cys20 is the site of S-diacylglycerol cysteine attachment.

The protein belongs to the BamC family. As to quaternary structure, part of the Bam complex.

It is found in the cell outer membrane. Functionally, part of the outer membrane protein assembly complex, which is involved in assembly and insertion of beta-barrel proteins into the outer membrane. In Pseudoalteromonas sp. (strain SM9913), this protein is Outer membrane protein assembly factor BamC.